Consider the following 150-residue polypeptide: Snaclec rhinocetin subunit beta (150 aa).

The signal sequence occupies residues 1–23 (MGRFIFLSSGLLVVFLSLSGTGA). 3 disulfide bridges follow: Cys27–Cys38, Cys55–Cys144, and Cys121–Cys136. The C-type lectin domain maps to 34-145 (YEGYCYKVFK…CNRQQYFVCK (112 aa)).

The protein belongs to the snaclec family. As to quaternary structure, heterodimer; disulfide-linked. In terms of tissue distribution, expressed by the venom gland.

It is found in the secreted. In terms of biological role, antagonist of the alpha-2 subunit of the integrin alpha-2/beta-1 (ITGA2/ITGB1) on human platelets and endothelial cells. This protein inhibits collagen-stimulated activation of human platelets in a dose-dependent manner. In addition, it antagonizes the binding of monoclonal antibodies against the alpha-2 subunit of integrin alpha-2/beta-1 to platelets and it coimmunoprecipitates with this integrin. The polypeptide is Snaclec rhinocetin subunit beta (Bitis rhinoceros (West African gaboon viper)).